The chain runs to 533 residues: UDP-glucuronosyltransferase 1-2 (533 aa).

The signal sequence occupies residues 1–27 (MDTGLCAPLRGLSGLLLLLCALPWAEG). N-linked (GlcNAc...) asparagine glycans are attached at residues asparagine 133, asparagine 141, asparagine 295, and asparagine 433. The helical transmembrane segment at 491–507 (VIGFLLAIVLTVVFIVY) threads the bilayer.

The protein belongs to the UDP-glycosyltransferase family.

It localises to the microsome. The protein localises to the endoplasmic reticulum membrane. The enzyme catalyses glucuronate acceptor + UDP-alpha-D-glucuronate = acceptor beta-D-glucuronoside + UDP + H(+). In terms of biological role, UDPGT is of major importance in the conjugation and subsequent elimination of potentially toxic xenobiotics and endogenous compounds. The polypeptide is UDP-glucuronosyltransferase 1-2 (Ugt1a2) (Rattus norvegicus (Rat)).